Reading from the N-terminus, the 120-residue chain is Immunoglobulin kappa variable 2D-29 (120 aa).

The first 20 residues, M1–A20, serve as a signal peptide directing secretion. The tract at residues D21 to C43 is framework-1. The region spanning D21–P120 is the Ig-like domain. C43 and C113 are disulfide-bonded. A complementarity-determining-1 region spans residues K44–Y59. Residues W60–Y74 are framework-2. Residues E75–S81 are complementarity-determining-2. Positions G82–C113 are framework-3. The interval M114–P120 is complementarity-determining-3.

Immunoglobulins are composed of two identical heavy chains and two identical light chains; disulfide-linked.

It localises to the secreted. It is found in the cell membrane. Its function is as follows. V region of the variable domain of immunoglobulin light chains that participates in the antigen recognition. Immunoglobulins, also known as antibodies, are membrane-bound or secreted glycoproteins produced by B lymphocytes. In the recognition phase of humoral immunity, the membrane-bound immunoglobulins serve as receptors which, upon binding of a specific antigen, trigger the clonal expansion and differentiation of B lymphocytes into immunoglobulins-secreting plasma cells. Secreted immunoglobulins mediate the effector phase of humoral immunity, which results in the elimination of bound antigens. The antigen binding site is formed by the variable domain of one heavy chain, together with that of its associated light chain. Thus, each immunoglobulin has two antigen binding sites with remarkable affinity for a particular antigen. The variable domains are assembled by a process called V-(D)-J rearrangement and can then be subjected to somatic hypermutations which, after exposure to antigen and selection, allow affinity maturation for a particular antigen. The protein is Immunoglobulin kappa variable 2D-29 of Homo sapiens (Human).